Here is a 311-residue protein sequence, read N- to C-terminus: UDP-N-acetylenolpyruvoylglucosamine reductase (311 aa).

Positions 29–191 constitute an FAD-binding PCMH-type domain; the sequence is IGGKADIVLK…LSARLKLKPI (163 aa). Residue R172 is part of the active site. Catalysis depends on S223, which acts as the Proton donor. E299 is a catalytic residue.

The protein belongs to the MurB family. The cofactor is FAD.

The protein localises to the cytoplasm. The catalysed reaction is UDP-N-acetyl-alpha-D-muramate + NADP(+) = UDP-N-acetyl-3-O-(1-carboxyvinyl)-alpha-D-glucosamine + NADPH + H(+). Its pathway is cell wall biogenesis; peptidoglycan biosynthesis. Cell wall formation. This Chloroherpeton thalassium (strain ATCC 35110 / GB-78) protein is UDP-N-acetylenolpyruvoylglucosamine reductase.